The primary structure comprises 186 residues: Putative glutathione-dependent formaldehyde-activating enzyme (186 aa).

The CENP-V/GFA domain occupies Phe20–Asp166. Residues Cys27, Cys29, Cys48, Cys50, Cys53, Cys95, and Cys98 each contribute to the Zn(2+) site.

It belongs to the Gfa family. Zn(2+) is required as a cofactor.

The enzyme catalyses S-(hydroxymethyl)glutathione = glutathione + formaldehyde. It participates in one-carbon metabolism; formaldehyde degradation; formate from formaldehyde (glutathione route): step 1/3. Its function is as follows. Catalyzes the condensation of formaldehyde and glutathione to S-hydroxymethylglutathione. The polypeptide is Putative glutathione-dependent formaldehyde-activating enzyme (Fusarium vanettenii (strain ATCC MYA-4622 / CBS 123669 / FGSC 9596 / NRRL 45880 / 77-13-4) (Fusarium solani subsp. pisi)).